Reading from the N-terminus, the 607-residue chain is Polypeptide N-acetylgalactosaminyltransferase 18 (607 aa).

Residues 1–12 are Cytoplasmic-facing; the sequence is MVCTRKTKTLVS. A helical; Signal-anchor for type II membrane protein transmembrane segment spans residues 13–35; the sequence is TCVILSGMTNIICLLYVGWVTNY. The Lumenal portion of the chain corresponds to 36 to 607; sequence IASVYVRGQE…ITNVLRSLAS (572 aa). 5 cysteine pairs are disulfide-bonded: Cys144/Cys377, Cys368/Cys447, Cys482/Cys498, Cys530/Cys543, and Cys571/Cys591. A glycan (N-linked (GlcNAc...) asparagine) is linked at Asn146. Residues 153–267 form a catalytic subdomain A region; that stretch reads LPEVSIVFIF…VGWAEPVLTR (115 aa). Substrate is bound at residue Asp194. An N-linked (GlcNAc...) asparagine glycan is attached at Asn195. 2 residues coordinate Mn(2+): Asp251 and His253. N-linked (GlcNAc...) asparagine glycosylation occurs at Asn320. The catalytic subdomain B stretch occupies residues 324-385; that stretch reads PIRSPALIGC…PCSRIAHIER (62 aa). His382 is a binding site for Mn(2+). Residues Arg385 and Tyr390 each coordinate substrate. Residues 469–599 form the Ricin B-type lectin domain; it reads AYGVLQNSLK…KCSGQHWSIT (131 aa).

This sequence belongs to the glycosyltransferase 2 family. GalNAc-T subfamily. Requires Mn(2+) as cofactor.

Its subcellular location is the golgi apparatus membrane. It catalyses the reaction L-seryl-[protein] + UDP-N-acetyl-alpha-D-galactosamine = a 3-O-[N-acetyl-alpha-D-galactosaminyl]-L-seryl-[protein] + UDP + H(+). It carries out the reaction L-threonyl-[protein] + UDP-N-acetyl-alpha-D-galactosamine = a 3-O-[N-acetyl-alpha-D-galactosaminyl]-L-threonyl-[protein] + UDP + H(+). Its pathway is protein modification; protein glycosylation. Functionally, catalyzes the initial reaction in O-linked oligosaccharide biosynthesis, the transfer of an N-acetyl-D-galactosamine (GalNAc) residue from UDP-GalNAc to a serine or threonine residue on the protein receptor. This is Polypeptide N-acetylgalactosaminyltransferase 18 (GALNT18) from Homo sapiens (Human).